The sequence spans 303 residues: Oxygen-dependent coproporphyrinogen-III oxidase (303 aa).

S93 serves as a coordination point for substrate. Positions 97 and 107 each coordinate a divalent metal cation. H107 serves as the catalytic Proton donor. A substrate-binding site is contributed by 109 to 111 (NVR). The a divalent metal cation site is built by H149 and H179. Positions 244–279 (YVEFNLVFDRGTLFGLQSGGRTESILLSMPPMAQWR) are important for dimerization. 262-264 (GGR) contributes to the substrate binding site.

Belongs to the aerobic coproporphyrinogen-III oxidase family. Homodimer. A divalent metal cation serves as cofactor.

It localises to the cytoplasm. It carries out the reaction coproporphyrinogen III + O2 + 2 H(+) = protoporphyrinogen IX + 2 CO2 + 2 H2O. The protein operates within porphyrin-containing compound metabolism; protoporphyrin-IX biosynthesis; protoporphyrinogen-IX from coproporphyrinogen-III (O2 route): step 1/1. In terms of biological role, involved in the heme biosynthesis. Catalyzes the aerobic oxidative decarboxylation of propionate groups of rings A and B of coproporphyrinogen-III to yield the vinyl groups in protoporphyrinogen-IX. The sequence is that of Oxygen-dependent coproporphyrinogen-III oxidase from Bordetella petrii (strain ATCC BAA-461 / DSM 12804 / CCUG 43448).